The sequence spans 287 residues: 3-alpha-hydroxysteroid sulfotransferase (287 aa).

44–49 (KSGTNW) lines the 3'-phosphoadenylyl sulfate pocket. Positions 72 and 77 each coordinate substrate. The active-site Proton acceptor is His-99. Residues Arg-121, Ser-129, Tyr-184, 218-223 (SSFQFM), and 247-249 (RKG) contribute to the 3'-phosphoadenylyl sulfate site.

Belongs to the sulfotransferase 1 family. Homodimer. As to expression, adrenal gland and liver.

It is found in the cytoplasm. The catalysed reaction is an alcohol + 3'-phosphoadenylyl sulfate = an alkyl sulfate + adenosine 3',5'-bisphosphate + H(+). In terms of biological role, sulfotransferase that utilizes 3'-phospho-5'-adenylyl sulfate (PAPS) as sulfonate donor to catalyze the sulfonation of 3-alpha-hydroxyl groups of neutral steroids. This Cavia porcellus (Guinea pig) protein is 3-alpha-hydroxysteroid sulfotransferase (STD1).